A 309-amino-acid polypeptide reads, in one-letter code: Homoserine kinase (309 aa).

91–101 (PIGSGLGSSAC) contributes to the ATP binding site.

This sequence belongs to the GHMP kinase family. Homoserine kinase subfamily.

The protein localises to the cytoplasm. It catalyses the reaction L-homoserine + ATP = O-phospho-L-homoserine + ADP + H(+). Its pathway is amino-acid biosynthesis; L-threonine biosynthesis; L-threonine from L-aspartate: step 4/5. Its function is as follows. Catalyzes the ATP-dependent phosphorylation of L-homoserine to L-homoserine phosphate. This chain is Homoserine kinase, found in Cronobacter sakazakii (strain ATCC BAA-894) (Enterobacter sakazakii).